The sequence spans 174 residues: Co-chaperone protein HscB homolog (174 aa).

One can recognise a J domain in the interval 2–74; that stretch reads NYFELFKFSP…IRRAEHMLSL (73 aa).

This sequence belongs to the HscB family. In terms of assembly, interacts with HscA and stimulates its ATPase activity.

Its function is as follows. Co-chaperone involved in the maturation of iron-sulfur cluster-containing proteins. Seems to help targeting proteins to be folded toward HscA. This is Co-chaperone protein HscB homolog from Shewanella baltica (strain OS223).